Here is a 192-residue protein sequence, read N- to C-terminus: NADH-quinone oxidoreductase subunit C (192 aa).

Residues 170–192 (LGGIPVEYKGATVPPPDERRQYA) form a disordered region.

The protein belongs to the complex I 30 kDa subunit family. As to quaternary structure, NDH-1 is composed of 14 different subunits. Subunits NuoB, C, D, E, F, and G constitute the peripheral sector of the complex.

The protein localises to the cell membrane. It catalyses the reaction a quinone + NADH + 5 H(+)(in) = a quinol + NAD(+) + 4 H(+)(out). NDH-1 shuttles electrons from NADH, via FMN and iron-sulfur (Fe-S) centers, to quinones in the respiratory chain. The immediate electron acceptor for the enzyme in this species is believed to be a menaquinone. Couples the redox reaction to proton translocation (for every two electrons transferred, four hydrogen ions are translocated across the cytoplasmic membrane), and thus conserves the redox energy in a proton gradient. The sequence is that of NADH-quinone oxidoreductase subunit C from Acidothermus cellulolyticus (strain ATCC 43068 / DSM 8971 / 11B).